The chain runs to 325 residues: Protease HtpX homolog (325 aa).

The chain crosses the membrane as a helical span at residues 20–40; that stretch reads IGYLLGGGGGMMIALVIAVAM. Zn(2+) is bound at residue H130. E131 is an active-site residue. A Zn(2+)-binding site is contributed by H134. 2 helical membrane-spanning segments follow: residues 145–165 and 173–193; these read IVAT…FLGG and VMGV…AMIV. E202 lines the Zn(2+) pocket. The interval 288 to 325 is disordered; it reads AMTARAAAPSQNSGPWGQRSDNAGGNSNGGSRYRGPWS. A compositionally biased stretch (low complexity) spans 306-325; sequence RSDNAGGNSNGGSRYRGPWS.

The protein belongs to the peptidase M48B family. It depends on Zn(2+) as a cofactor.

It is found in the cell inner membrane. In Brucella suis (strain ATCC 23445 / NCTC 10510), this protein is Protease HtpX homolog.